The sequence spans 180 residues: uncharacterized protein (180 aa).

The next 6 helical transmembrane spans lie at 4 to 24, 25 to 45, 57 to 77, 81 to 101, 124 to 144, and 156 to 176; these read KSNI…LSLF, IKNF…WLFI, NLLA…GIIY, FLDI…GILF, FLTL…LLIL, and IIRT…FYTF.

It localises to the cell membrane. This is an uncharacterized protein from Methanocaldococcus jannaschii (strain ATCC 43067 / DSM 2661 / JAL-1 / JCM 10045 / NBRC 100440) (Methanococcus jannaschii).